The following is a 403-amino-acid chain: Acetate kinase (403 aa).

Asn7 provides a ligand contact to Mg(2+). Residue Lys14 coordinates ATP. Arg90 serves as a coordination point for substrate. The Proton donor/acceptor role is filled by Asp147. Residues 207–211 (HIGNG), 283–285 (DMR), and 331–335 (GVGEN) contribute to the ATP site. Glu386 serves as a coordination point for Mg(2+).

The protein belongs to the acetokinase family. As to quaternary structure, homodimer. Mg(2+) serves as cofactor. It depends on Mn(2+) as a cofactor.

Its subcellular location is the cytoplasm. The catalysed reaction is acetate + ATP = acetyl phosphate + ADP. Its pathway is metabolic intermediate biosynthesis; acetyl-CoA biosynthesis; acetyl-CoA from acetate: step 1/2. Functionally, catalyzes the formation of acetyl phosphate from acetate and ATP. Can also catalyze the reverse reaction. This Thermotoga petrophila (strain ATCC BAA-488 / DSM 13995 / JCM 10881 / RKU-1) protein is Acetate kinase.